Reading from the N-terminus, the 297-residue chain is uncharacterized protein (297 aa).

Positions 136-174 are disordered; that stretch reads FSETNDDSTDEEIDTPINDDDDDDKNNDADNNDINEDNK. Residues 139–170 are compositionally biased toward acidic residues; the sequence is TNDDSTDEEIDTPINDDDDDDKNNDADNNDIN.

The protein to S.pombe SpBC725.03.

This is an uncharacterized protein from Saccharomyces cerevisiae (strain ATCC 204508 / S288c) (Baker's yeast).